We begin with the raw amino-acid sequence, 404 residues long: Omega-3 fatty acid desaturase, chloroplastic (404 aa).

The disordered stretch occupies residues 28–50; that stretch reads TVDSSSSPPIEEEPKTQRFDPGA. Residues 121 to 125 carry the Histidine box-1 motif; it reads HDCGH. Positions 157-161 match the Histidine box-2 motif; sequence HRTHH. Positions 324–328 match the Histidine box-3 motif; the sequence is HVIHH.

It belongs to the fatty acid desaturase type 1 family.

It is found in the plastid. Its subcellular location is the chloroplast membrane. It functions in the pathway lipid metabolism; polyunsaturated fatty acid biosynthesis. Its function is as follows. Chloroplast omega-3 fatty acid desaturase introduces the third double bond in the biosynthesis of 16:3 and 18:3 fatty acids, important constituents of plant membranes. It is thought to use ferredoxin as an electron donor and to act on fatty acids esterified to galactolipids, sulfolipids and phosphatidylglycerol. The sequence is that of Omega-3 fatty acid desaturase, chloroplastic (FAD7) from Brassica napus (Rape).